Here is a 305-residue protein sequence, read N- to C-terminus: Homoserine kinase (305 aa).

P95–A105 lines the ATP pocket.

It belongs to the GHMP kinase family. Homoserine kinase subfamily.

It localises to the cytoplasm. It carries out the reaction L-homoserine + ATP = O-phospho-L-homoserine + ADP + H(+). It functions in the pathway amino-acid biosynthesis; L-threonine biosynthesis; L-threonine from L-aspartate: step 4/5. Functionally, catalyzes the ATP-dependent phosphorylation of L-homoserine to L-homoserine phosphate. This Streptomyces avermitilis (strain ATCC 31267 / DSM 46492 / JCM 5070 / NBRC 14893 / NCIMB 12804 / NRRL 8165 / MA-4680) protein is Homoserine kinase.